Reading from the N-terminus, the 361-residue chain is Chorismate synthase (361 aa).

NADP(+) is bound by residues arginine 48 and arginine 54. FMN contacts are provided by residues arginine 125–serine 127, asparagine 238–alanine 239, glycine 278, lysine 293–serine 297, and arginine 319.

Belongs to the chorismate synthase family. In terms of assembly, homotetramer. FMNH2 is required as a cofactor.

The catalysed reaction is 5-O-(1-carboxyvinyl)-3-phosphoshikimate = chorismate + phosphate. The protein operates within metabolic intermediate biosynthesis; chorismate biosynthesis; chorismate from D-erythrose 4-phosphate and phosphoenolpyruvate: step 7/7. Functionally, catalyzes the anti-1,4-elimination of the C-3 phosphate and the C-6 proR hydrogen from 5-enolpyruvylshikimate-3-phosphate (EPSP) to yield chorismate, which is the branch point compound that serves as the starting substrate for the three terminal pathways of aromatic amino acid biosynthesis. This reaction introduces a second double bond into the aromatic ring system. This is Chorismate synthase from Escherichia coli O1:K1 / APEC.